The following is a 104-amino-acid chain: L-rhamnose mutarotase (104 aa).

Tyr-18 is a substrate binding site. Residue His-22 is the Proton donor of the active site. Substrate-binding positions include Tyr-41 and 76–77 (WW).

Belongs to the rhamnose mutarotase family. As to quaternary structure, homodimer.

The protein resides in the cytoplasm. The enzyme catalyses alpha-L-rhamnose = beta-L-rhamnose. It functions in the pathway carbohydrate metabolism; L-rhamnose metabolism. Involved in the anomeric conversion of L-rhamnose. The protein is L-rhamnose mutarotase of Shigella dysenteriae serotype 1 (strain Sd197).